The chain runs to 291 residues: Elongation factor Ts (291 aa).

Residues 80 to 83 (TDFV) form an involved in Mg(2+) ion dislocation from EF-Tu region.

It belongs to the EF-Ts family.

It is found in the cytoplasm. Associates with the EF-Tu.GDP complex and induces the exchange of GDP to GTP. It remains bound to the aminoacyl-tRNA.EF-Tu.GTP complex up to the GTP hydrolysis stage on the ribosome. The polypeptide is Elongation factor Ts (Acinetobacter baylyi (strain ATCC 33305 / BD413 / ADP1)).